Here is a 648-residue protein sequence, read N- to C-terminus: Beta-glucuronidase (648 aa).

The signal sequence occupies residues M1–A22. 2 N-linked (GlcNAc...) asparagine glycosylation sites follow: N172 and N416. Catalysis depends on E447, which acts as the Proton donor. N-linked (GlcNAc...) asparagine glycosylation is present at N627.

Belongs to the glycosyl hydrolase 2 family. In terms of assembly, homotetramer. Post-translationally, undergoes a post-transcriptional proteolytic cleavage near its C-terminal end, which reduces its size by approximately 3 kDa. The site of this cleavage has as yet not been determined.

Its subcellular location is the lysosome. It catalyses the reaction a beta-D-glucuronoside + H2O = D-glucuronate + an alcohol. Its activity is regulated as follows. Inhibited by L-aspartic acid. Its function is as follows. Plays an important role in the degradation of dermatan and keratan sulfates. This is Beta-glucuronidase (Gusb) from Rattus norvegicus (Rat).